The primary structure comprises 297 residues: N-acetylmuramic acid 6-phosphate etherase (297 aa).

The SIS domain maps to 55 to 218; it reads AVAALKSGGR…STGAMVKFGK (164 aa). E83 (proton donor) is an active-site residue. E114 is a catalytic residue.

Belongs to the GCKR-like family. MurNAc-6-P etherase subfamily. In terms of assembly, homodimer.

It catalyses the reaction N-acetyl-D-muramate 6-phosphate + H2O = N-acetyl-D-glucosamine 6-phosphate + (R)-lactate. It participates in amino-sugar metabolism; 1,6-anhydro-N-acetylmuramate degradation. Its pathway is amino-sugar metabolism; N-acetylmuramate degradation. It functions in the pathway cell wall biogenesis; peptidoglycan recycling. Specifically catalyzes the cleavage of the D-lactyl ether substituent of MurNAc 6-phosphate, producing GlcNAc 6-phosphate and D-lactate. Together with AnmK, is also required for the utilization of anhydro-N-acetylmuramic acid (anhMurNAc) either imported from the medium or derived from its own cell wall murein, and thus plays a role in cell wall recycling. The sequence is that of N-acetylmuramic acid 6-phosphate etherase from Salmonella dublin (strain CT_02021853).